The primary structure comprises 328 residues: Renalase (328 aa).

FAD contacts are provided by residues Ala13, Asp32–Lys33, Arg40, and Gln56–Tyr57. Substrate is bound by residues Tyr57–Arg61 and Ser96–Asp98. Residue Ile128 coordinates FAD. Position 185 (Thr185) interacts with substrate. Asp302 provides a ligand contact to FAD. Arg308 is a substrate binding site. Val309 is an FAD binding site.

It belongs to the bacterial renalase family. FAD is required as a cofactor.

The catalysed reaction is 1,2-dihydro-beta-NAD + O2 + H(+) = H2O2 + NAD(+). It carries out the reaction 1,2-dihydro-beta-NADP + O2 + H(+) = H2O2 + NADP(+). The enzyme catalyses 1,6-dihydro-beta-NADP + O2 + H(+) = H2O2 + NADP(+). It catalyses the reaction 1,6-dihydro-beta-NAD + O2 + H(+) = H2O2 + NAD(+). In terms of biological role, catalyzes the oxidation of the 1,2-dihydro- and 1,6-dihydro- isomeric forms of beta-NAD(P) back to beta-NAD(P)+. Has a preference for 1,2-dihydro-beta-NAD as substrate. May serve to protect primary metabolism dehydrogenases from inhibition by the 1,2-dihydro- and 1,6-dihydro-beta-NAD(P) isomers. The sequence is that of Renalase from Pseudomonas syringae pv. tomato (strain ATCC BAA-871 / DC3000).